A 358-amino-acid chain; its full sequence is Endo-1,4-beta-xylanase B (358 aa).

An N-terminal signal peptide occupies residues 1–17 (MRFSASLLLALTGSAAA). A GH10 domain is found at 40–352 (QGLDAAMKAA…KAAYNAFLRG (313 aa)). Residue Asn136 is glycosylated (N-linked (GlcNAc...) asparagine). Glu166 serves as the catalytic Proton donor. Glu274 functions as the Nucleophile in the catalytic mechanism.

This sequence belongs to the glycosyl hydrolase 10 (cellulase F) family.

It localises to the secreted. The enzyme catalyses Endohydrolysis of (1-&gt;4)-beta-D-xylosidic linkages in xylans.. Its pathway is glycan degradation; xylan degradation. With respect to regulation, partial inhibition of activity is detected in the presence of Ag(+), Cu2(+) and SDS. Like most fungal xylanases, activity is completely inhibited by Hg(2+) since Hg(2+) could interact with tryptophan residues and oxidize the indole ring. Beta-mercaptoethanol enhances the enzymatic activity by counteracting the oxidation effects of the S-S linkage between cysteine residues. Endo-1,4-beta-xylanase involved in the hydrolysis of xylan, a major structural heterogeneous polysaccharide found in plant biomass representing the second most abundant polysaccharide in the biosphere, after cellulose. Is more active on soluble wheat arabinoxylan (defined as 100%) than on birchwood xylan (75.4%) and beechwood xylan (70.8%), and less active on insoluble wheat arabinoxylan (17.4%). Xylose is the major hydrolysis product of XynB. In Humicola insolens (Soft-rot fungus), this protein is Endo-1,4-beta-xylanase B.